A 354-amino-acid polypeptide reads, in one-letter code: Protein C42 (354 aa).

The Nuclear localization signal motif lies at 349 to 352; the sequence is KRKK.

It belongs to the baculoviridae C42 protein family.

The protein localises to the host nucleus. This chain is Protein C42, found in Orgyia pseudotsugata (Douglas-fir tussock moth).